The sequence spans 318 residues: Forkhead box protein I2 (318 aa).

Positions 1–30 are disordered; it reads MATYCDDLGPSSAPPGQAQATAHPPGYEPG. Positions 102–196 form a DNA-binding region, fork-head; it reads RPPYSYSALI…DNGNFRRKRK (95 aa).

It localises to the nucleus. In terms of biological role, possible transcriptional activator. The protein is Forkhead box protein I2 (FOXI2) of Homo sapiens (Human).